The following is a 183-amino-acid chain: TATA-box-binding protein 1 (183 aa).

2 repeat units span residues 8–84 (IENV…AKKL) and 99–177 (VQNI…RQQL).

Belongs to the TBP family.

Functionally, general factor that plays a role in the activation of archaeal genes transcribed by RNA polymerase. Binds specifically to the TATA box promoter element which lies close to the position of transcription initiation. In Methanosarcina acetivorans (strain ATCC 35395 / DSM 2834 / JCM 12185 / C2A), this protein is TATA-box-binding protein 1.